Here is a 36-residue protein sequence, read N- to C-terminus: Pancreatic polypeptide (36 aa).

Tyr-36 bears the Tyrosine amide mark.

This sequence belongs to the NPY family.

It is found in the secreted. Functionally, hormone secreted by pancreatic cells that acts as a regulator of pancreatic and gastrointestinal functions. The polypeptide is Pancreatic polypeptide (PPY) (Meleagris gallopavo (Wild turkey)).